The primary structure comprises 744 residues: Biotin sulfoxide reductase (744 aa).

S121 provides a ligand contact to Mo-bis(molybdopterin guanine dinucleotide).

The protein belongs to the prokaryotic molybdopterin-containing oxidoreductase family. The cofactor is Mo-bis(molybdopterin guanine dinucleotide).

In terms of biological role, this enzyme may serve as a scavenger, allowing the cell to utilize biotin sulfoxide as a biotin source. It reduces a spontaneous oxidation product of biotin, D-biotin D-sulfoxide (BSO or BDS), back to biotin. The sequence is that of Biotin sulfoxide reductase from Cereibacter sphaeroides (Rhodobacter sphaeroides).